A 216-amino-acid polypeptide reads, in one-letter code: Hydrogenase-4 component E (216 aa).

At 1–3 (MTG) the chain is on the periplasmic side. The chain crosses the membrane as a helical span at residues 4–24 (SMIVNNLAGLMMLTSLFVISV). The Cytoplasmic portion of the chain corresponds to 25 to 38 (KSYRLSCGFYACQS). 2 helical membrane passes run 39 to 59 (LVLV…QLLI) and 60 to 80 (WSAS…TYAA). Over 81-92 (RNIPQNIPEKAL) the chain is Cytoplasmic. The chain crosses the membrane as a helical span at residues 93 to 113 (FGPAMMALLAALIVLLCAFVV). The Periplasmic portion of the chain corresponds to 114–122 (QPVKLPMAT). A helical transmembrane segment spans residues 123–143 (GLKPALAVALGHFLLGLLCIV). Over 144–150 (SQRNILR) the chain is Cytoplasmic. The chain crosses the membrane as a helical span at residues 151–171 (QIFGYCLMENGSHLVLALLAW). The Periplasmic segment spans residues 172-175 (RAPE). Residues 176–196 (LVEIGIATDAIFAVIVMVLLA) traverse the membrane as a helical segment. The Cytoplasmic segment spans residues 197-216 (RKIWRTHGTLDVNNLTALKG).

The protein localises to the cell inner membrane. The protein is Hydrogenase-4 component E (hyfE) of Escherichia coli O157:H7.